A 292-amino-acid chain; its full sequence is Siderophore triacetylfusarinine C esterase (292 aa).

Triacetylfusarinine C-binding residues include Arg97, Ser148, Tyr149, Ser174, Trp176, and His267.

It belongs to the esterase D family.

It localises to the cytoplasm. It carries out the reaction triacetylfusarinine C + 3 H2O = 3 N-acetylfusarinine + Fe(3+). In terms of biological role, displays specific triacetylfusarinine C (TAFC) esterase activity but does not hydrolyze fusarinine C, which has the same core structure as TAFC. Hydrolysis optimizes but is not essential for TAFC-mediated iron uptake. Both extra- and intracellular siderophores have been shown to be crucial for the virulence. Subsequent to chelation of iron and uptake, FsC and TAFC are hydrolyzed and the iron is transferred to the metabolism or to the intracellular siderophore ferricrocin (FC) for transport and storage of iron. Hydrolyzes both TAFC and DF-TAFC with equal efficiencies, suggesting that its function might not be restricted to the release of iron from the siderophore but might also include the degradation of the iron-free chelator to protect cells. This Aspergillus fumigatus (strain ATCC MYA-4609 / CBS 101355 / FGSC A1100 / Af293) (Neosartorya fumigata) protein is Siderophore triacetylfusarinine C esterase.